Reading from the N-terminus, the 273-residue chain is NAD-dependent protein deacylase (273 aa).

The Deacetylase sirtuin-type domain occupies 20–272; that stretch reads RERLRQRIFF…PEFVDKFLKG (253 aa). Position 48-67 (48-67) interacts with NAD(+); that stretch reads GAGISAESGIRTFRAADGLW. Substrate contacts are provided by tyrosine 92 and arginine 95. 129–132 contributes to the NAD(+) binding site; the sequence is QNID. Histidine 147 acts as the Proton acceptor in catalysis. Residues cysteine 155 and cysteine 174 each coordinate Zn(2+). NAD(+) is bound by residues 214–216, 240–242, and alanine 258; these read GTS and NLE.

The protein belongs to the sirtuin family. Class III subfamily. It depends on Zn(2+) as a cofactor.

The protein resides in the cytoplasm. The catalysed reaction is N(6)-acetyl-L-lysyl-[protein] + NAD(+) + H2O = 2''-O-acetyl-ADP-D-ribose + nicotinamide + L-lysyl-[protein]. The enzyme catalyses N(6)-succinyl-L-lysyl-[protein] + NAD(+) + H2O = 2''-O-succinyl-ADP-D-ribose + nicotinamide + L-lysyl-[protein]. It catalyses the reaction N(6)-(2-hydroxyisobutanoyl)-L-lysyl-[protein] + NAD(+) + H2O = 2''-O-(2-hydroxyisobutanoyl)-ADP-D-ribose + nicotinamide + L-lysyl-[protein]. Functionally, NAD-dependent lysine deacetylase that specifically removes acetyl groups on target proteins. Also acts as a protein-lysine deacylase by mediating protein desuccinylation and de-2-hydroxyisobutyrylation. Modulates the activities of several proteins which are inactive in their acylated form. The protein is NAD-dependent protein deacylase of Salmonella typhi.